Here is a 192-residue protein sequence, read N- to C-terminus: Ribosomal RNA small subunit methyltransferase G (192 aa).

Residues Gly63, Phe68, 112 to 113, and Arg125 each bind S-adenosyl-L-methionine; that span reads IE.

The protein belongs to the methyltransferase superfamily. RNA methyltransferase RsmG family.

The protein localises to the cytoplasm. It catalyses the reaction guanosine(527) in 16S rRNA + S-adenosyl-L-methionine = N(7)-methylguanosine(527) in 16S rRNA + S-adenosyl-L-homocysteine. In terms of biological role, specifically methylates the N7 position of guanine in position 527 of 16S rRNA. This chain is Ribosomal RNA small subunit methyltransferase G, found in Rickettsia bellii (strain OSU 85-389).